Consider the following 1444-residue polypeptide: DNA polymerase III PolC-type (1444 aa).

The disordered stretch occupies residues 196 to 218 (EAVQVMQKRQAEGQNGNSSAAPL). Polar residues predominate over residues 207 to 216 (EGQNGNSSAA). The Exonuclease domain occupies 428–584 (YCVFDVETTG…FDAEATAYLA (157 aa)).

Belongs to the DNA polymerase type-C family. PolC subfamily.

The protein localises to the cytoplasm. The enzyme catalyses DNA(n) + a 2'-deoxyribonucleoside 5'-triphosphate = DNA(n+1) + diphosphate. Required for replicative DNA synthesis. This DNA polymerase also exhibits 3' to 5' exonuclease activity. The sequence is that of DNA polymerase III PolC-type from Listeria welshimeri serovar 6b (strain ATCC 35897 / DSM 20650 / CCUG 15529 / CIP 8149 / NCTC 11857 / SLCC 5334 / V8).